Here is a 312-residue protein sequence, read N- to C-terminus: D-alanine--D-alanine ligase (312 aa).

The 206-residue stretch at Lys102–Lys307 folds into the ATP-grasp domain. Residue Ile136–Thr191 participates in ATP binding. Mg(2+) contacts are provided by Asp262, Glu274, and Asn276.

The protein belongs to the D-alanine--D-alanine ligase family. Mg(2+) is required as a cofactor. The cofactor is Mn(2+).

The protein localises to the cytoplasm. It carries out the reaction 2 D-alanine + ATP = D-alanyl-D-alanine + ADP + phosphate + H(+). It functions in the pathway cell wall biogenesis; peptidoglycan biosynthesis. Cell wall formation. This is D-alanine--D-alanine ligase from Desulforamulus reducens (strain ATCC BAA-1160 / DSM 100696 / MI-1) (Desulfotomaculum reducens).